The following is a 317-amino-acid chain: MWLYLLALVGLWNLLRLFRERKVVSHLQDKYVFITGCDSGFGNLLARQLDRRGMRVLAACLTEKGAEQLRSKTSDRLETVILDVTKTESIVAATQWVKERVGNRGLWGLVNNAGISVPMGPNEWMRKKDFASVLDVNLLGVIEVTLNMLPLVRKARGRVVNIASTMGRMSLLGGGYCISKYGVEAFSDSLRRELTYFGVKVAIIEPGGFKTNVTNMERLSDNLKKLWDQATEEVKEIYGEKFRDSYMKAMESLVNMCSGDLSLVTDCMEHALTSCHPRTRYSAGWDAKFFYLPMSYLPTFLSDAVIYWGSVKPARAL.

NADP(+) is bound at residue 33–57 (FITGCDSGFGNLLARQLDRRGMRVL). S164 is a binding site for substrate. Y176 (proton acceptor) is an active-site residue.

This sequence belongs to the short-chain dehydrogenases/reductases (SDR) family.

Its subcellular location is the microsome. It localises to the endoplasmic reticulum. It catalyses the reaction all-trans-retinol--[retinol-binding protein] + NAD(+) = all-trans-retinal--[retinol-binding protein] + NADH + H(+). It participates in cofactor metabolism; retinol metabolism. In terms of biological role, acts on retinol bound on cellular retinol-binding protein (CRBP). The chain is Retinol dehydrogenase 7 from Rattus norvegicus (Rat).